Reading from the N-terminus, the 378-residue chain is Mitogen-activated protein kinase mpkC (378 aa).

A Protein kinase domain is found at 20–300; that stretch reads YVNPQPIGMG…AQDALRHPYL (281 aa). Residues 26 to 34 and lysine 49 contribute to the ATP site; that span reads IGMGSFGLV. Aspartate 141 functions as the Proton acceptor in the catalytic mechanism.

The protein belongs to the protein kinase superfamily. Ser/Thr protein kinase family. MAP kinase subfamily. The cofactor is Mg(2+).

Its subcellular location is the nucleus. It carries out the reaction L-seryl-[protein] + ATP = O-phospho-L-seryl-[protein] + ADP + H(+). The enzyme catalyses L-threonyl-[protein] + ATP = O-phospho-L-threonyl-[protein] + ADP + H(+). With respect to regulation, activated by threonine and tyrosine phosphorylation. Functionally, mitogen-activated protein kinase (MAPK), part of the high-osmolarity glycerol (HOG) pathway. With sakA, plays a role in the osmotic and oxidative stress responses. Involved in paradoxical growth, the cell wall integrity (CWI) pathway and biofilm formation. SakA and mpkC collaborate during virulence and mpkC could act by modulating sakA activity upon exposure to several types of stresses and during cell wall biosynthesis. In Aspergillus fumigatus (strain CBS 144.89 / FGSC A1163 / CEA10) (Neosartorya fumigata), this protein is Mitogen-activated protein kinase mpkC.